A 362-amino-acid polypeptide reads, in one-letter code: DNA replication and repair protein RecF (362 aa).

Position 30–37 (30–37) interacts with ATP; the sequence is GLNAQGKS.

This sequence belongs to the RecF family.

The protein localises to the cytoplasm. In terms of biological role, the RecF protein is involved in DNA metabolism; it is required for DNA replication and normal SOS inducibility. RecF binds preferentially to single-stranded, linear DNA. It also seems to bind ATP. The polypeptide is DNA replication and repair protein RecF (Thermoanaerobacter pseudethanolicus (strain ATCC 33223 / 39E) (Clostridium thermohydrosulfuricum)).